Reading from the N-terminus, the 127-residue chain is Small ribosomal subunit protein uS13 (127 aa).

The disordered stretch occupies residues 96 to 127; that stretch reads LPCHGQRTSTNARTRKGPKRTAVKKKGAAKKK. Over residues 108–127 the composition is skewed to basic residues; the sequence is RTRKGPKRTAVKKKGAAKKK.

The protein belongs to the universal ribosomal protein uS13 family. In terms of assembly, part of the 30S ribosomal subunit. Forms a loose heterodimer with protein S19. Forms two bridges to the 50S subunit in the 70S ribosome.

In terms of biological role, located at the top of the head of the 30S subunit, it contacts several helices of the 16S rRNA. In the 70S ribosome it contacts the 23S rRNA (bridge B1a) and protein L5 of the 50S subunit (bridge B1b), connecting the 2 subunits; these bridges are implicated in subunit movement. Contacts the tRNAs in the A and P-sites. The protein is Small ribosomal subunit protein uS13 of Desulfosudis oleivorans (strain DSM 6200 / JCM 39069 / Hxd3) (Desulfococcus oleovorans).